The following is a 294-amino-acid chain: MTAQSSFLQLNSIFISILIEAIPFILIGVILSGIIQMFVSEEMIARIMPKNRFLAVLFGALAGVLFPACECGIIPITRRLLLKGVPLHAGVAFMLTAPIINPIVLFSTYIAFGNRWSVVFYRGGLALAVSLIIGVILSYQFKDNQLLKPDEPGHHHHHHGTLLQKLGGTLRHAIDEFFSVGKYLIIGAFIAAAMQTYVKTSTLLAIGQNDVSSSLVMMGLAFVLSLCSEVDAFIASSFSSTFSLGSLIAFLVFGAMVDIKNLLMMLAAFKKRFVFLLITYIVVIVLAGSLLVKG.

8 helical membrane passes run 15–35 (ISIL…SGII), 54–74 (LAVL…CGII), 92–112 (AFML…YIAF), 117–137 (SVVF…GVIL), 174–194 (IDEF…AAAM), 215–235 (LVMM…AFIA), 247–267 (LIAF…MMLA), and 273–293 (FVFL…LLVK).

It belongs to the UPF0718 family.

It is found in the cell membrane. The chain is UPF0718 protein YcgR (ycgR) from Bacillus subtilis (strain 168).